The chain runs to 124 residues: uncharacterized protein (124 aa).

In terms of biological role, this protein may be involved in virus assembly. This is an uncharacterized protein from Sulfolobus spindle-shape virus 1 (SSV1).